A 515-amino-acid chain; its full sequence is Lysosomal acid glucosylceramidase (515 aa).

Residues 1-19 form the signal peptide; that stretch reads MAARLIGFFLFQAVSWAYG. Intrachain disulfides connect Cys-23-Cys-35 and Cys-37-Cys-42. N-linked (GlcNAc...) asparagine glycans are attached at residues Asn-38 and Asn-78. An N-linked (GlcNAc...) (high mannose) asparagine glycan is attached at Asn-165. Residue Glu-254 is the Proton donor of the active site. Residue Asn-289 is glycosylated (N-linked (GlcNAc...) asparagine). The Nucleophile role is filled by Glu-358. A glycan (N-linked (GlcNAc...) asparagine) is linked at Asn-480.

The protein belongs to the glycosyl hydrolase 30 family. In terms of assembly, interacts with saposin-C. Interacts with SCARB2. Interacts with TCP1. Interacts with GRN; this interaction prevents aggregation of GBA1-SCARB2 complex via interaction with HSPA1A upon stress.

The protein resides in the lysosome membrane. The catalysed reaction is a beta-D-glucosyl-(1&lt;-&gt;1')-N-acylsphing-4-enine + H2O = an N-acylsphing-4-enine + D-glucose. It catalyses the reaction a beta-D-galactosyl-(1&lt;-&gt;1')-N-acylsphing-4-enine + H2O = an N-acylsphing-4-enine + D-galactose. The enzyme catalyses cholesteryl 3-beta-D-glucoside + H2O = cholesterol + D-glucose. It carries out the reaction a beta-D-glucosyl-(1&lt;-&gt;1')-N-acylsphing-4-enine + cholesterol = cholesteryl 3-beta-D-glucoside + an N-acylsphing-4-enine. The catalysed reaction is beta-D-glucosyl-(1&lt;-&gt;1')-N-hexadecanoylsphing-4-enine + cholesterol = cholesteryl 3-beta-D-glucoside + N-hexadecanoylsphing-4-enine. It catalyses the reaction beta-D-glucosyl-N-(9Z-octadecenoyl)-sphing-4E-enine + cholesterol = N-(9Z-octadecenoyl)-sphing-4-enine + cholesteryl 3-beta-D-glucoside. The enzyme catalyses beta-D-glucosyl-N-octanoylsphing-4E-enine + cholesterol = N-octanoylsphing-4-enine + cholesteryl 3-beta-D-glucoside. It carries out the reaction beta-D-glucosyl-N-dodecanoylsphing-4-enine + cholesterol = N-dodecanoylsphing-4-enine + cholesteryl 3-beta-D-glucoside. The catalysed reaction is beta-D-glucosyl-(1&lt;-&gt;1)-N-octadecanoylsphing-4-enine + cholesterol = N-octadecanoylsphing-4-enine + cholesteryl 3-beta-D-glucoside. It catalyses the reaction beta-D-glucosyl-(1&lt;-&gt;1')-N-(15Z-tetracosenoyl)-sphing-4-enine + cholesterol = N-(15Z-tetracosenoyl)-sphing-4-enine + cholesteryl 3-beta-D-glucoside. The enzyme catalyses a beta-D-galactosyl-(1&lt;-&gt;1')-N-acylsphing-4-enine + cholesterol = cholesteryl 3-beta-D-galactoside + an N-acylsphing-4-enine. It carries out the reaction 1-(beta-D-galactosyl)-N-dodecanoylsphing-4-enine + cholesterol = cholesteryl 3-beta-D-galactoside + N-dodecanoylsphing-4-enine. The catalysed reaction is a beta-D-xylosyl-(1&lt;-&gt;1')-N-acylsphing-4-enine + cholesterol = cholesteryl 3-beta-D-xyloside + an N-acylsphing-4-enine. It catalyses the reaction beta-D-xylosyl-(1&lt;-&gt;1')-N-(9Z-octadecenoyl)-sphing-4-enine + cholesterol = cholesteryl 3-beta-D-xyloside + N-(9Z-octadecenoyl)-sphing-4-enine. It functions in the pathway steroid metabolism; cholesterol metabolism. Its pathway is sphingolipid metabolism. With respect to regulation, inhibited by conduritol B epoxide/CBE. Functionally, glucosylceramidase that catalyzes, within the lysosomal compartment, the hydrolysis of glucosylceramides/GlcCers (such as beta-D-glucosyl-(1&lt;-&gt;1')-N-acylsphing-4-enine) into free ceramides (such as N-acylsphing-4-enine) and glucose. Plays a central role in the degradation of complex lipids and the turnover of cellular membranes. Through the production of ceramides, participates in the PKC-activated salvage pathway of ceramide formation. Catalyzes the glucosylation of cholesterol, through a transglucosylation reaction where glucose is transferred from GlcCer to cholesterol. GlcCer containing mono-unsaturated fatty acids (such as beta-D-glucosyl-N-(9Z-octadecenoyl)-sphing-4-enine) are preferred as glucose donors for cholesterol glucosylation when compared with GlcCer containing same chain length of saturated fatty acids (such as beta-D-glucosyl-N-octadecanoyl-sphing-4-enine). Under specific conditions, may alternatively catalyze the reverse reaction, transferring glucose from cholesteryl 3-beta-D-glucoside to ceramide. Can also hydrolyze cholesteryl 3-beta-D-glucoside producing glucose and cholesterol. Catalyzes the hydrolysis of galactosylceramides/GalCers (such as beta-D-galactosyl-(1&lt;-&gt;1')-N-acylsphing-4-enine), as well as the transfer of galactose between GalCers and cholesterol in vitro, but with lower activity than with GlcCers. Contrary to GlcCer and GalCer, xylosylceramide/XylCer (such as beta-D-xyosyl-(1&lt;-&gt;1')-N-acylsphing-4-enine) is not a good substrate for hydrolysis, however it is a good xylose donor for transxylosylation activity to form cholesteryl 3-beta-D-xyloside. This Mus musculus (Mouse) protein is Lysosomal acid glucosylceramidase (Gba1).